Here is a 285-residue protein sequence, read N- to C-terminus: HTH-type transcriptional regulator MurR (285 aa).

Residues 1-77 form the HTH rpiR-type domain; it reads MLYLTKIRNA…MALIGEYSAS (77 aa). The segment at residues 37–56 is a DNA-binding region (H-T-H motif); the sequence is SRKMAKQLGISQSSIVKFAQ. One can recognise an SIS domain in the interval 128 to 268; sequence IIEVISKAPF…FVGLVQLNDV (141 aa).

Homotetramer.

The protein operates within amino-sugar metabolism; N-acetylmuramate degradation [regulation]. Its function is as follows. Represses the expression of the murPQ operon involved in the uptake and degradation of N-acetylmuramic acid (MurNAc). Binds to two adjacent inverted repeats within the operator region. MurNAc 6-phosphate, the substrate of MurQ, is the specific inducer that weakens binding of MurR to the operator. This is HTH-type transcriptional regulator MurR from Escherichia coli O7:K1 (strain IAI39 / ExPEC).